The chain runs to 168 residues: Xanthine-guanine phosphoribosyltransferase (168 aa).

5-phospho-alpha-D-ribose 1-diphosphate is bound by residues 46–47 (RG) and 101–109 (DDLVDSGVT). Asp102 lines the Mg(2+) pocket. A guanine-binding site is contributed by Asp105. Residues Asp105 and Val148 each contribute to the xanthine site. GMP contacts are provided by residues 105-109 (DSGVT) and 147-148 (WV).

Belongs to the purine/pyrimidine phosphoribosyltransferase family. XGPT subfamily. As to quaternary structure, homotetramer. Mg(2+) serves as cofactor.

Its subcellular location is the cell inner membrane. The catalysed reaction is GMP + diphosphate = guanine + 5-phospho-alpha-D-ribose 1-diphosphate. The enzyme catalyses XMP + diphosphate = xanthine + 5-phospho-alpha-D-ribose 1-diphosphate. It catalyses the reaction IMP + diphosphate = hypoxanthine + 5-phospho-alpha-D-ribose 1-diphosphate. It participates in purine metabolism; GMP biosynthesis via salvage pathway; GMP from guanine: step 1/1. The protein operates within purine metabolism; XMP biosynthesis via salvage pathway; XMP from xanthine: step 1/1. In terms of biological role, purine salvage pathway enzyme that catalyzes the transfer of the ribosyl-5-phosphate group from 5-phospho-alpha-D-ribose 1-diphosphate (PRPP) to the N9 position of the 6-oxopurines guanine and xanthine to form the corresponding ribonucleotides GMP (guanosine 5'-monophosphate) and XMP (xanthosine 5'-monophosphate), with the release of PPi. To a lesser extent, also acts on hypoxanthine. The sequence is that of Xanthine-guanine phosphoribosyltransferase from Gluconobacter oxydans (strain 621H) (Gluconobacter suboxydans).